The primary structure comprises 192 residues: Pupal cuticle protein (192 aa).

The signal sequence occupies residues 1–15 (MHLLMSLFGVLAVMQ). The Chitin-binding type R&amp;R domain occupies 45 to 106 (DGNYRYAYET…PVGDHIPKVP (62 aa)). Polar residues predominate over residues 149–163 (QDQTTPRSRPSSTPK). The segment at 149-192 (QDQTTPRSRPSSTPKTIYLTHPPTLSDAPTRRPLRQRQNDSRRR) is disordered.

In terms of biological role, component of the cuticle of the pupa of fruit fly. The polypeptide is Pupal cuticle protein (Pcp) (Drosophila pseudoobscura pseudoobscura (Fruit fly)).